A 311-amino-acid chain; its full sequence is Lipoyl synthase (311 aa).

The [4Fe-4S] cluster site is built by Cys47, Cys52, Cys58, Cys73, Cys77, Cys80, and Ser287. In terms of domain architecture, Radical SAM core spans 59–276 (WTKKHATVMI…AQIARAKGFL (218 aa)).

Belongs to the radical SAM superfamily. Lipoyl synthase family. [4Fe-4S] cluster is required as a cofactor.

The protein localises to the cytoplasm. It carries out the reaction [[Fe-S] cluster scaffold protein carrying a second [4Fe-4S](2+) cluster] + N(6)-octanoyl-L-lysyl-[protein] + 2 oxidized [2Fe-2S]-[ferredoxin] + 2 S-adenosyl-L-methionine + 4 H(+) = [[Fe-S] cluster scaffold protein] + N(6)-[(R)-dihydrolipoyl]-L-lysyl-[protein] + 4 Fe(3+) + 2 hydrogen sulfide + 2 5'-deoxyadenosine + 2 L-methionine + 2 reduced [2Fe-2S]-[ferredoxin]. Its pathway is protein modification; protein lipoylation via endogenous pathway; protein N(6)-(lipoyl)lysine from octanoyl-[acyl-carrier-protein]: step 2/2. Functionally, catalyzes the radical-mediated insertion of two sulfur atoms into the C-6 and C-8 positions of the octanoyl moiety bound to the lipoyl domains of lipoate-dependent enzymes, thereby converting the octanoylated domains into lipoylated derivatives. The sequence is that of Lipoyl synthase from Sphingopyxis alaskensis (strain DSM 13593 / LMG 18877 / RB2256) (Sphingomonas alaskensis).